A 433-amino-acid polypeptide reads, in one-letter code: N-lysine methyltransferase SMYD2 (433 aa).

One can recognise an SET domain in the interval 7 to 241 (GGLERFCSPG…PGEEVFTSYI (235 aa)). Position 17–19 (17–19 (KGR)) interacts with S-adenosyl-L-methionine. Cysteine 52, cysteine 55, cysteine 65, cysteine 68, cysteine 74, cysteine 78, histidine 86, and cysteine 90 together coordinate Zn(2+). An MYND-type zinc finger spans residues 52–90 (CEFCFARKEGLSKCGRCKQAFYCNVECQREDWPMHKLEC). S-adenosyl-L-methionine contacts are provided by residues histidine 137, 206–207 (NH), and 258–260 (YFF).

Belongs to the class V-like SAM-binding methyltransferase superfamily. In terms of assembly, interacts with RNA polymerase II and HELZ. Interacts with SIN3A and HDAC1. Interacts (via MYND-type zinc finger) with EPB41L3. Interacts (via SET domain) with p53/TP53. Interacts with RB1 and HSP90AA1.

It is found in the cytoplasm. The protein localises to the cytosol. It localises to the nucleus. The catalysed reaction is L-lysyl(4)-[histone H3] + 3 S-adenosyl-L-methionine = N(6),N(6),N(6)-trimethyl-L-lysyl(4)-[histone H3] + 3 S-adenosyl-L-homocysteine + 3 H(+). The enzyme catalyses L-lysyl-[protein] + S-adenosyl-L-methionine = N(6)-methyl-L-lysyl-[protein] + S-adenosyl-L-homocysteine + H(+). Protein-lysine N-methyltransferase that methylates both histones and non-histone proteins, including p53/TP53 and RB1. Specifically trimethylates histone H3 'Lys-4' (H3K4me3) in vivo. The activity requires interaction with HSP90alpha. Shows even higher methyltransferase activity on p53/TP53. Monomethylates 'Lys-370' of p53/TP53, leading to decreased DNA-binding activity and subsequent transcriptional regulation activity of p53/TP53. Monomethylates RB1 at 'Lys-860'. The protein is N-lysine methyltransferase SMYD2 (SMYD2) of Bos taurus (Bovine).